The sequence spans 71 residues: Ceratotoxin-A (71 aa).

Positions 1-23 are cleaved as a signal peptide; sequence MANLKAVFLICIVAFIALQCVVA. 2 propeptides span residues 24 to 35 and 65 to 71; these read EPAAEDSVVVKR and VAAGLVG.

In terms of assembly, homomer of four to six subunits.

The protein localises to the secreted. In terms of biological role, female-specific peptides with potent activity against Gram-positive and Gram-negative bacteria. They have as well hemolytic activity. This Ceratitis capitata (Mediterranean fruit fly) protein is Ceratotoxin-A (CTXA1).